The following is a 108-amino-acid chain: uncharacterized protein (108 aa).

The helical transmembrane segment at 64–84 (LFIIYYYYYLLICLSPHFFPI) threads the bilayer.

It localises to the membrane. This is an uncharacterized protein from Schizosaccharomyces pombe (strain 972 / ATCC 24843) (Fission yeast).